We begin with the raw amino-acid sequence, 346 residues long: C5a anaphylatoxin chemotactic receptor 1 (346 aa).

Topologically, residues 1–33 (MDDNNSDWTSYDFGNDTIPSPNEISLSHIGTRH) are extracellular. N-linked (GlcNAc...) asparagine glycans are attached at residues N4 and N15. The helical transmembrane segment at 34–60 (WITLVCYGIVFLLGVPGNALVVWVTGF) threads the bilayer. Residues 61 to 65 (RMPNS) are Cytoplasmic-facing. Residues 66-89 (VNAQWFLNLAIADLLCCLSLPILM) traverse the membrane as a helical segment. Over 90–106 (VPLAQDQHWPFGALACK) the chain is Extracellular. C105 and C183 are joined by a disulfide. Residues 107–128 (LFSGIFYMMMYCSVLLLVVISL) traverse the membrane as a helical segment. Over 129–149 (DRFLLVTKPVWCQNNRQPRQA) the chain is Cytoplasmic. The chain crosses the membrane as a helical span at residues 150 to 170 (RILCFIIWILGLLGSSPYFAH). The Extracellular portion of the chain corresponds to 171–194 (MEIQHHSETKTVCTGSYSSLGHAW). The helical transmembrane segment at 195-220 (AITIIRSFLFFLLPFLIICISHWKVY) threads the bilayer. At 221 to 238 (HMTSSGRRQRDKSSRTLR) the chain is on the cytoplasmic side. The helical transmembrane segment at 239 to 261 (VILALVLGFFLCWTPLHIVDLLI) threads the bilayer. Residues 262-279 (LVSDQPSERFEVNLNLAH) are Extracellular-facing. The chain crosses the membrane as a helical span at residues 280 to 300 (VLTLCLAYINSCLNPLLYVCL). Residues 301-346 (GRGFKENLISSLRSVLHFASEAPTHGPSMTTNSKSTTDGVFREKPV) are Cytoplasmic-facing. The interval 323-346 (PTHGPSMTTNSKSTTDGVFREKPV) is disordered. Residues 327-338 (PSMTTNSKSTTD) are compositionally biased toward polar residues.

It belongs to the G-protein coupled receptor 1 family.

It is found in the cell membrane. Receptor for the chemotactic and inflammatory peptide anaphylatoxin C5a. This receptor stimulates chemotaxis, granule enzyme release and superoxide anion production. The sequence is that of C5a anaphylatoxin chemotactic receptor 1 (c5ar1) from Danio rerio (Zebrafish).